The chain runs to 310 residues: Cysteine synthase (310 aa).

Lys44 carries the post-translational modification N6-(pyridoxal phosphate)lysine. Residues Asn74, 179-183 (GTGGT), and Ser267 contribute to the pyridoxal 5'-phosphate site.

It belongs to the cysteine synthase/cystathionine beta-synthase family. Pyridoxal 5'-phosphate is required as a cofactor.

The enzyme catalyses O-acetyl-L-serine + hydrogen sulfide = L-cysteine + acetate. Its pathway is amino-acid biosynthesis; L-cysteine biosynthesis; L-cysteine from L-serine: step 2/2. This Neisseria meningitidis serogroup B (strain ATCC BAA-335 / MC58) protein is Cysteine synthase (cysK).